We begin with the raw amino-acid sequence, 559 residues long: PHD finger protein 1 (559 aa).

In terms of domain architecture, Tudor spans 29–86 (PRLWEGQDVLARWTDGLLYLGTIKKVDSAREVCLVQFEDDSQFLVLWKDISPAALPGE). PHD-type zinc fingers lie at residues 87–142 (ELLC…CVFA) and 186–240 (QSYC…CRGG). Disordered regions lie at residues 338–434 (PVEL…TDAR) and 448–526 (HPSA…GGVS). Residues 369 to 386 (WRSEPEPLRRRQKGKVEE) show a composition bias toward basic and acidic residues. Polar residues-rich tracts occupy residues 417-426 (NQSYEGSSGY) and 449-459 (PSASTAGTSGD). Positions 481–515 (SSPHSVTASSSSVPALTPGFSRHSPPSPLCRSLSP) are enriched in low complexity.

Belongs to the Polycomblike family. Associated component of the PRC2 complex. Interacts with p53/TP53. Interacts with CHMP1. As to expression, testis-specific.

The protein resides in the nucleus. The protein localises to the cytoplasm. Its subcellular location is the cytoskeleton. It localises to the microtubule organizing center. It is found in the centrosome. Polycomb group (PcG) that specifically binds histone H3 trimethylated at 'Lys-36' (H3K36me3) and recruits the PRC2 complex. Involved in DNA damage response and is recruited at double-strand breaks (DSBs). Acts by binding to H3K36me3, a mark for transcriptional activation, and recruiting the PRC2 complex: it is however unclear whether recruitment of the PRC2 complex to H3K36me3 leads to enhance or inhibit H3K27me3 methylation mediated by the PRC2 complex. According to some reports, PRC2 recruitment by PHF1 promotes H3K27me3 and subsequent gene silencing by inducing spreading of PRC2 and H3K27me3 into H3K36me3 loci. According to other reports, PHF1 recruits the PRC2 complex at double-strand breaks (DSBs) and inhibits the activity of PRC2. Regulates p53/TP53 stability and prolonges its turnover: may act by specifically binding to a methylated from of p53/TP53. The chain is PHD finger protein 1 (Phf1) from Mus musculus (Mouse).